An 89-amino-acid chain; its full sequence is Large ribosomal subunit protein eL43 (89 aa).

4 residues coordinate Zn(2+): cysteine 38, cysteine 41, cysteine 56, and cysteine 59. The segment at cysteine 38–cysteine 59 adopts a C4-type zinc-finger fold.

Belongs to the eukaryotic ribosomal protein eL43 family. Putative zinc-binding subfamily. In terms of assembly, part of the 50S ribosomal subunit. It depends on Zn(2+) as a cofactor.

Functionally, binds to the 23S rRNA. This Methanothermobacter thermautotrophicus (strain ATCC 29096 / DSM 1053 / JCM 10044 / NBRC 100330 / Delta H) (Methanobacterium thermoautotrophicum) protein is Large ribosomal subunit protein eL43.